A 280-amino-acid polypeptide reads, in one-letter code: Hematopoietically-expressed homeobox protein HHEX homolog (280 aa).

2 disordered regions span residues methionine 1–proline 35 and arginine 221–alanine 280. A DNA-binding region (homeobox) is located at residues arginine 165–lysine 224. The segment covering glycine 232–arginine 252 has biased composition (basic and acidic residues).

Its subcellular location is the nucleus. In terms of biological role, transcription factor that may play a central role in activating or maintaining gene expression in the vegetal pole. Part of a gene regulatory circuit with Erg and Tgif that operates early in mesoderm development. The sequence is that of Hematopoietically-expressed homeobox protein HHEX homolog from Patiria miniata (Bat star).